A 713-amino-acid polypeptide reads, in one-letter code: MIFSYKHLKKLANLNEISFEDVIKAFNLIGFEVEETKEIRHVENIKYGKVLKIYKNENSDNLTVCEIQFKDKIRIIQTTAKNVEINKYVMAFIPGSKLANNLIESKLLKGIISEGMLVGFDEMLGFEIKLVPKELSKNVIVLDEANLNEDPIANLELHDYLIDLAILPNRSDAISYLVMAKELAAFFGTKIDNDLICLKNLRVSKINSNLEGIFVKSKTLELKLYDKYLLLKSHLKLTNTYKDLENLILIHTGMPIHFLNLKSLEKVNIVSKSSSLEIANRTLKIDNNLVIEKSREIIAIPYLETQKEFEIKDSQKEFFIFMNILSPKEVRKTIKTLKLESSQIKQATKTISHGMQLNAIQYMQSLFEEIEIVNINLNLKPKEILFDHTFINRIAGFEIVKEQKFINAKKSLEILGFKFFEDKILVPAYRHDYTGPYDVIEELFRFYGYDNFPILQPEIKPFKIQKKYDFKFSLASKNYNEIKTYSLVAKEDNNFDPFNFKTEILMKTFPSEKRRIIRNSQAFSLLEIAEYNIKRKLEKINFFDFGMINEGKRALIFASNEKSFNEIKKDLFSLFSYKFELRKTKNNYLHPNASAHIFYENKLIGWMGKINPSLKISDLIFVEILLDEFNISKNQFKEYNFDPLKFRDITFSIEKNQSIDTYLKELKKIKNIFEVQIIDKFEKNEKLNITVRILLEDDAIKNLDEAILKNSWN.

Residues 39-153 (IRHVENIKYG…EANLNEDPIA (115 aa)) form the tRNA-binding domain. The B5 domain occupies 379-454 (LKPKEILFDH…RFYGYDNFPI (76 aa)). Mg(2+) contacts are provided by Asp432, Asp438, Glu441, and Glu442.

It belongs to the phenylalanyl-tRNA synthetase beta subunit family. Type 1 subfamily. Tetramer of two alpha and two beta subunits. It depends on Mg(2+) as a cofactor.

It localises to the cytoplasm. The enzyme catalyses tRNA(Phe) + L-phenylalanine + ATP = L-phenylalanyl-tRNA(Phe) + AMP + diphosphate + H(+). The chain is Phenylalanine--tRNA ligase beta subunit from Mycoplasma mobile (strain ATCC 43663 / 163K / NCTC 11711) (Mesomycoplasma mobile).